Here is a 100-residue protein sequence, read N- to C-terminus: Protein translation factor SUI1 homolog (100 aa).

This sequence belongs to the SUI1 family.

This Thermoplasma volcanium (strain ATCC 51530 / DSM 4299 / JCM 9571 / NBRC 15438 / GSS1) protein is Protein translation factor SUI1 homolog.